Reading from the N-terminus, the 380-residue chain is Cytochrome b (380 aa).

A run of 4 helical transmembrane segments spans residues 34 to 54 (FGSL…LLAT), 78 to 99 (WLIR…YLHI), 114 to 134 (WNTG…GYVL), and 179 to 199 (FFAL…IHLA). Residues His84 and His98 each contribute to the heme b site. Positions 183 and 197 each coordinate heme b. A ubiquinone is bound at residue His202. The next 4 helical transmembrane spans lie at 227–247 (LKDI…ALFS), 289–309 (LGGV…PFLH), 321–341 (LSQI…WIGS), and 348–368 (FIII…ILFP).

Belongs to the cytochrome b family. In terms of assembly, the cytochrome bc1 complex contains 11 subunits: 3 respiratory subunits (MT-CYB, CYC1 and UQCRFS1), 2 core proteins (UQCRC1 and UQCRC2) and 6 low-molecular weight proteins (UQCRH/QCR6, UQCRB/QCR7, UQCRQ/QCR8, UQCR10/QCR9, UQCR11/QCR10 and a cleavage product of UQCRFS1). This cytochrome bc1 complex then forms a dimer. Heme b is required as a cofactor.

Its subcellular location is the mitochondrion inner membrane. Component of the ubiquinol-cytochrome c reductase complex (complex III or cytochrome b-c1 complex) that is part of the mitochondrial respiratory chain. The b-c1 complex mediates electron transfer from ubiquinol to cytochrome c. Contributes to the generation of a proton gradient across the mitochondrial membrane that is then used for ATP synthesis. The polypeptide is Cytochrome b (MT-CYB) (Callipepla gambelii (Gambel's quail)).